Consider the following 475-residue polypeptide: MSPQTETKASVGFKAGVKEYKLNYYTPDYETKDTDILAAFRLTPQPGVPPEEAGAAVAAESSTGTWTTVWTDGLTSLDRYKGRCYHIEPVAGEENQYIAYVAYPLDLFEEGSVTNMFTSIVGNVFGFKALRALRLEDLRIPPAYTKTFQGPPHGIQVERDKLNKYGRPLLGCTIKPKLGLSAKNYGRAVYECLRGGLDFTKDDENVNSQPFMRWRDRFVFCAEALYKAQAETGEIKGHYLNATAGTCEEMIKRAVFARELGVPIVMHDYLTGGFTANTSLAHYCRDNGLLLHIHRAMHAVIDRQKNHGIHFRVLAKALRMSGGDHIHAGTVVGKLEGERDITLGFVDLLRDDFIEKDRSRGLYFTQDWVSLPGVLPVASGGIHVWHMPALTEIFGDDSVLQFGGGTLGHPWGNAPGAVANRVALEACVQARNEGRDLAREGNEVIREASKWSPELAAACEIWKEIKFEFEAMDTV.

Positions 1–2 (MS) are excised as a propeptide. Pro3 is subject to N-acetylproline. Lys14 is subject to N6,N6,N6-trimethyllysine. Residues Asn123 and Thr173 each coordinate substrate. The active-site Proton acceptor is Lys175. Lys177 provides a ligand contact to substrate. Positions 201, 203, and 204 each coordinate Mg(2+). Residue Lys201 is modified to N6-carboxylysine. His294 acts as the Proton acceptor in catalysis. The substrate site is built by Arg295, His327, and Ser379.

Belongs to the RuBisCO large chain family. Type I subfamily. In terms of assembly, heterohexadecamer of 8 large chains and 8 small chains; disulfide-linked. The disulfide link is formed within the large subunit homodimers. It depends on Mg(2+) as a cofactor. The disulfide bond which can form in the large chain dimeric partners within the hexadecamer appears to be associated with oxidative stress and protein turnover.

Its subcellular location is the plastid. It localises to the chloroplast. It catalyses the reaction 2 (2R)-3-phosphoglycerate + 2 H(+) = D-ribulose 1,5-bisphosphate + CO2 + H2O. It carries out the reaction D-ribulose 1,5-bisphosphate + O2 = 2-phosphoglycolate + (2R)-3-phosphoglycerate + 2 H(+). In terms of biological role, ruBisCO catalyzes two reactions: the carboxylation of D-ribulose 1,5-bisphosphate, the primary event in carbon dioxide fixation, as well as the oxidative fragmentation of the pentose substrate in the photorespiration process. Both reactions occur simultaneously and in competition at the same active site. This chain is Ribulose bisphosphate carboxylase large chain, found in Chloranthus spicatus (Chulantree).